We begin with the raw amino-acid sequence, 644 residues long: Phosphatidylinositol polyphosphate 5-phosphatase type IV (644 aa).

Positions 1–193 (MPSKAENLRP…RLPSLLPPRP (193 aa)) are disordered. 8 repeat units span residues 10-13 (PSEP), 15-18 (PQPP), 28-31 (PGAP), 39-42 (PPDV), 55-58 (PATP), 69-71 (PIA), 72-74 (PRP), and 75-78 (PARP). A 13 X 4 AA repeats of P-X-X-P region spans residues 10 to 242 (PSEPAPQPPE…SLGPGRPRSP (233 aa)). Positions 78-90 (PRLERALSLDDKG) are enriched in basic and acidic residues. Serine 99 is subject to Phosphoserine. A compositionally biased stretch (polar residues) spans 107–118 (NGTSPSRGSVQS). Copy 9 of the repeat occupies 121–124 (PGAP). The segment covering 152-163 (GSPSSGGNPLSG) has biased composition (low complexity). 4 consecutive repeat copies span residues 169–172 (PNLP), 183–185 (PRL), 190–193 (PPRP), and 236–239 (PGRP). A phosphoserine mark is found at serine 241 and serine 256. Cysteine 641 bears the Cysteine methyl ester mark. Cysteine 641 carries the S-farnesyl cysteine lipid modification. The propeptide at 642 to 644 (SVS) is removed in mature form.

Belongs to the inositol polyphosphate 5-phosphatase family. As to quaternary structure, interacts (when prenylated) with PDE6D; this is important for normal location in cilia.

The protein resides in the cytoplasm. It is found in the cytoskeleton. Its subcellular location is the cilium axoneme. The protein localises to the golgi apparatus. It localises to the golgi stack membrane. The protein resides in the cell membrane. It is found in the cell projection. Its subcellular location is the ruffle. The protein localises to the nucleus. The enzyme catalyses a 1,2-diacyl-sn-glycero-3-phospho-(1D-myo-inositol-4,5-bisphosphate) + H2O = a 1,2-diacyl-sn-glycero-3-phospho-(1D-myo-inositol 4-phosphate) + phosphate. The catalysed reaction is a 1,2-diacyl-sn-glycero-3-phospho-(1D-myo-inositol-3,4,5-trisphosphate) + H2O = a 1,2-diacyl-sn-glycero-3-phospho-(1D-myo-inositol-3,4-bisphosphate) + phosphate. It carries out the reaction a 1,2-diacyl-sn-glycero-3-phospho-(1D-myo-inositol-3,5-bisphosphate) + H2O = a 1,2-diacyl-sn-glycero-3-phospho-(1D-myo-inositol-3-phosphate) + phosphate. Its function is as follows. Phosphatidylinositol (PtdIns) phosphatase that specifically hydrolyzes the 5-phosphate of phosphatidylinositol-3,4,5-trisphosphate (PtdIns(3,4,5)P3), phosphatidylinositol 4,5-bisphosphate(PtdIns(4,5)P2) and phosphatidylinositol 3,5-bisphosphate (PtdIns(3,5)P2). Specific for lipid substrates, inactive towards water soluble inositol phosphates. Plays an essential role in the primary cilium by controlling ciliary growth and phosphoinositide 3-kinase (PI3K) signaling and stability. The protein is Phosphatidylinositol polyphosphate 5-phosphatase type IV (INPP5E) of Pan troglodytes (Chimpanzee).